Consider the following 888-residue polypeptide: Pumilio homology domain family member 4 (888 aa).

Phosphothreonine occurs at positions 205, 212, and 252. 2 disordered regions span residues 236 to 270 (KAKKPSVGANNTAKTRTQSISFDNTPSSTSFIPPT) and 467 to 551 (MNSA…RKIE). Residues 243–270 (GANNTAKTRTQSISFDNTPSSTSFIPPT) show a composition bias toward polar residues. Ser256 carries the phosphoserine modification. Low complexity-rich tracts occupy residues 478-499 (NNNSMSSHNDNDNIGNSNYNNK) and 521-543 (NNNNNNNNNNNNNNNSNATNSNS). In terms of domain architecture, PUM-HD spans 539–888 (TNSNSAEKQR…RIIGMLHLDS (350 aa)). 8 Pumilio repeats span residues 563–598 (QYIGSIHSLCKDQHGCRFLQKQLDILGSKAADAIFE), 599–634 (ETKDYTVELMTDSFGNYLIQKLLEEVTTEQRIVLTK), 635–671 (ISSPHFVEISLNPHGTRALQKLIECIKTDEEAQIVVD), 672–707 (SLRPYTVQLSKDLNGNHVIQKCLQRLKPENFQFIFD), 708–743 (AISDSCIDIATHRHGCCVLQRCLDHGTTEQCDNLCD), 744–783 (KLLALVDKLTLDPFGNYVVQYIITKEAEKNKYDYTHKIVH), 784–821 (LLKPRAIELSIHKFGSNVIEKILKTAIVSEPMILEILN), and 823–861 (GGETGIQSLLNDSYGNYVLQTALDISHKQNDYLYKRLSE).

Its function is as follows. Is not essential for haploid growth, but may affect diploid formation. This Saccharomyces cerevisiae (strain ATCC 204508 / S288c) (Baker's yeast) protein is Pumilio homology domain family member 4 (PUF4).